The following is a 99-amino-acid chain: uncharacterized protein (99 aa).

This is an uncharacterized protein from Mycobacterium tuberculosis (strain CDC 1551 / Oshkosh).